The chain runs to 469 residues: MKFHIITLGCPKNTVDSEGMHGILTREGHTAVDSSDGADVVIVNTCSFINAAREETVGVLQELANNKAPGQKLIAAGCMAESHGDVLRSRVPKLDATLSTKEWMRIGSVVAGGVAPSKTTGFGIPLMGGAPSAMPSTGLNLSLTPAATGDSLGAYGDWRTTAITRNKRGPSAYLKISDGCNLRCAFCTIPSFKGDMRSKAVGSILGEARELVEAGVQEIILVAQHLTDYGRDLGMKQNGLGVLLEELAAVVPADRWIRLMYAYPQSVTPDLVETMARLPQLCHYVDMPLQHAHPDTLRRMRRPPDTDKTKAIVNSLRQAMPDLSLRTTFIVGYPGETRDEFKALLEFLEEMQFDRVGMFRYSLEPGTVAGELPDQVAERVKERRWNEAMAVQQVISRARTARFVGQTMKVLVEGTGTDDDGRAIVVGRSYRDAPEVDGLVFGYGAADVGQFAKIAINKTTDYDLWGEIV.

One can recognise an MTTase N-terminal domain in the interval 1–115 (MKFHIITLGC…IGSVVAGGVA (115 aa)). Residues cysteine 10, cysteine 46, cysteine 78, cysteine 180, cysteine 184, and cysteine 187 each contribute to the [4Fe-4S] cluster site. A Radical SAM core domain is found at 166 to 398 (NKRGPSAYLK…MAVQQVISRA (233 aa)). The region spanning 401-469 (ARFVGQTMKV…TDYDLWGEIV (69 aa)) is the TRAM domain.

Belongs to the methylthiotransferase family. RimO subfamily. [4Fe-4S] cluster is required as a cofactor.

It localises to the cytoplasm. It carries out the reaction L-aspartate(89)-[ribosomal protein uS12]-hydrogen + (sulfur carrier)-SH + AH2 + 2 S-adenosyl-L-methionine = 3-methylsulfanyl-L-aspartate(89)-[ribosomal protein uS12]-hydrogen + (sulfur carrier)-H + 5'-deoxyadenosine + L-methionine + A + S-adenosyl-L-homocysteine + 2 H(+). Functionally, catalyzes the methylthiolation of an aspartic acid residue of ribosomal protein uS12. The polypeptide is Ribosomal protein uS12 methylthiotransferase RimO (Herpetosiphon aurantiacus (strain ATCC 23779 / DSM 785 / 114-95)).